Consider the following 352-residue polypeptide: Inhibin beta C chain (352 aa).

The first 18 residues, 1-18 (MASSLLLALLFLTPTTVV), serve as a signal peptide directing secretion. The propeptide occupies 19–236 (NPKTEGPCPA…VEGKHRVRRR (218 aa)). Residues Asn-111, Asn-143, Asn-161, and Asn-173 are each glycosylated (N-linked (GlcNAc...) asparagine). Cystine bridges form between Cys-240–Cys-248, Cys-247–Cys-317, Cys-276–Cys-349, and Cys-280–Cys-351.

It belongs to the TGF-beta family. As to quaternary structure, homodimeric or heterodimeric through association with alpha and beta subunits, linked by one or more disulfide bonds. Inhibins are heterodimers of one alpha and one beta subunit. Activins are homo- or heterodimers of beta subunits only. In terms of tissue distribution, mainly expressed in the adult liver.

It localises to the secreted. Functionally, inhibins and activins inhibit and activate, respectively, the secretion of follitropin by the pituitary gland. Inhibins/activins are involved in regulating a number of diverse functions such as hypothalamic and pituitary hormone secretion, gonadal hormone secretion, germ cell development and maturation, erythroid differentiation, insulin secretion, nerve cell survival, embryonic axial development or bone growth, depending on their subunit composition. Inhibins appear to oppose the functions of activins. This chain is Inhibin beta C chain (Inhbc), found in Mus musculus (Mouse).